The sequence spans 223 residues: Urease accessory protein UreF (223 aa).

The protein belongs to the UreF family. As to quaternary structure, ureD, UreF and UreG form a complex that acts as a GTP-hydrolysis-dependent molecular chaperone, activating the urease apoprotein by helping to assemble the nickel containing metallocenter of UreC. The UreE protein probably delivers the nickel.

It localises to the cytoplasm. Required for maturation of urease via the functional incorporation of the urease nickel metallocenter. The protein is Urease accessory protein UreF of Rhizobium leguminosarum bv. trifolii (strain WSM2304).